We begin with the raw amino-acid sequence, 45 residues long: Mu-conotoxin-like Cal 12.1.2a (45 aa).

Disulfide bonds link cysteine 3-cysteine 16, cysteine 11-cysteine 28, cysteine 18-cysteine 33, and cysteine 27-cysteine 39. Proline 23 bears the 4-hydroxyproline mark. A 6'-bromotryptophan mark is found at tryptophan 37 and tryptophan 38. Proline 40 bears the 4-hydroxyproline mark. A 6'-bromotryptophan modification is found at tryptophan 44.

Expressed by the venom duct.

It is found in the secreted. In terms of biological role, mu-conotoxins block voltage-gated sodium channels. This toxin reversibly blocks voltage-gated sodium channel in cephalopods, with no alteration in the voltage dependence of sodium conductance or on the kinetics of inactivation. This Californiconus californicus (California cone) protein is Mu-conotoxin-like Cal 12.1.2a.